The chain runs to 243 residues: tRNA (guanine-N(1)-)-methyltransferase (243 aa).

S-adenosyl-L-methionine is bound by residues glycine 108 and 127–132 (LGDFVL).

It belongs to the RNA methyltransferase TrmD family. As to quaternary structure, homodimer.

Its subcellular location is the cytoplasm. The catalysed reaction is guanosine(37) in tRNA + S-adenosyl-L-methionine = N(1)-methylguanosine(37) in tRNA + S-adenosyl-L-homocysteine + H(+). In terms of biological role, specifically methylates guanosine-37 in various tRNAs. The protein is tRNA (guanine-N(1)-)-methyltransferase of Streptococcus equi subsp. equi (strain 4047).